We begin with the raw amino-acid sequence, 272 residues long: Phosphoglycolate phosphatase (272 aa).

Asp-19 serves as the catalytic Nucleophile. 3 residues coordinate Mg(2+): Asp-19, Asp-21, and Asp-182.

This sequence belongs to the HAD-like hydrolase superfamily. CbbY/CbbZ/Gph/YieH family. Mg(2+) is required as a cofactor.

It catalyses the reaction 2-phosphoglycolate + H2O = glycolate + phosphate. It functions in the pathway organic acid metabolism; glycolate biosynthesis; glycolate from 2-phosphoglycolate: step 1/1. Functionally, specifically catalyzes the dephosphorylation of 2-phosphoglycolate. Is involved in the dissimilation of the intracellular 2-phosphoglycolate formed during the DNA repair of 3'-phosphoglycolate ends, a major class of DNA lesions induced by oxidative stress. In Pseudomonas savastanoi pv. phaseolicola (strain 1448A / Race 6) (Pseudomonas syringae pv. phaseolicola (strain 1448A / Race 6)), this protein is Phosphoglycolate phosphatase.